The sequence spans 342 residues: Ketol-acid reductoisomerase (NADP(+)) (342 aa).

The region spanning 2–181 (VKVYYNGDIK…GGARAGVLET (180 aa)) is the KARI N-terminal Rossmann domain. Residues 25 to 28 (YGSQ), R48, S52, and 82 to 85 (DEQQ) each bind NADP(+). H107 is a catalytic residue. G133 serves as a coordination point for NADP(+). The region spanning 182-327 (TFKEETETDL…RQLREMMPFV (146 aa)) is the KARI C-terminal knotted domain. D190, E194, E226, and E230 together coordinate Mg(2+). S251 contacts substrate.

This sequence belongs to the ketol-acid reductoisomerase family. It depends on Mg(2+) as a cofactor.

The enzyme catalyses (2R)-2,3-dihydroxy-3-methylbutanoate + NADP(+) = (2S)-2-acetolactate + NADPH + H(+). It catalyses the reaction (2R,3R)-2,3-dihydroxy-3-methylpentanoate + NADP(+) = (S)-2-ethyl-2-hydroxy-3-oxobutanoate + NADPH + H(+). The protein operates within amino-acid biosynthesis; L-isoleucine biosynthesis; L-isoleucine from 2-oxobutanoate: step 2/4. It participates in amino-acid biosynthesis; L-valine biosynthesis; L-valine from pyruvate: step 2/4. Its function is as follows. Involved in the biosynthesis of branched-chain amino acids (BCAA). Catalyzes an alkyl-migration followed by a ketol-acid reduction of (S)-2-acetolactate (S2AL) to yield (R)-2,3-dihydroxy-isovalerate. In the isomerase reaction, S2AL is rearranged via a Mg-dependent methyl migration to produce 3-hydroxy-3-methyl-2-ketobutyrate (HMKB). In the reductase reaction, this 2-ketoacid undergoes a metal-dependent reduction by NADPH to yield (R)-2,3-dihydroxy-isovalerate. The chain is Ketol-acid reductoisomerase (NADP(+)) from Bacillus velezensis (strain DSM 23117 / BGSC 10A6 / LMG 26770 / FZB42) (Bacillus amyloliquefaciens subsp. plantarum).